Here is a 325-residue protein sequence, read N- to C-terminus: N-acetyl-gamma-glutamyl-phosphate reductase (325 aa).

The active site involves cysteine 131.

The protein belongs to the NAGSA dehydrogenase family. Type 1 subfamily.

The protein localises to the cytoplasm. It catalyses the reaction N-acetyl-L-glutamate 5-semialdehyde + phosphate + NADP(+) = N-acetyl-L-glutamyl 5-phosphate + NADPH + H(+). It participates in amino-acid biosynthesis; L-arginine biosynthesis; N(2)-acetyl-L-ornithine from L-glutamate: step 3/4. Catalyzes the NADPH-dependent reduction of N-acetyl-5-glutamyl phosphate to yield N-acetyl-L-glutamate 5-semialdehyde. This Methylobacterium sp. (strain 4-46) protein is N-acetyl-gamma-glutamyl-phosphate reductase.